The sequence spans 298 residues: Inosose dehydratase 1 (298 aa).

The protein belongs to the IolE/MocC family. Requires glutathione as cofactor. Co(2+) is required as a cofactor. The cofactor is Mn(2+).

It carries out the reaction scyllo-inosose = 3D-3,5/4-trihydroxycyclohexane-1,2-dione + H2O. It participates in polyol metabolism; myo-inositol degradation into acetyl-CoA; acetyl-CoA from myo-inositol: step 2/7. Catalyzes the dehydration of inosose (2-keto-myo-inositol, 2KMI or 2,4,6/3,5-pentahydroxycyclohexanone) to 3D-(3,5/4)-trihydroxycyclohexane-1,2-dione (D-2,3-diketo-4-deoxy-epi-inositol). This is Inosose dehydratase 1 from Bacillus cereus (strain ZK / E33L).